The following is a 451-amino-acid chain: Phenylalanine-4-hydroxylase (451 aa).

Serine 16 carries the post-translational modification Phosphoserine; by PKA. The region spanning 35 to 113 is the ACT domain; the sequence is SLIFSLKEEV…TVHELSRDKK (79 aa). Fe cation-binding residues include histidine 284, histidine 289, and glutamate 329.

It belongs to the biopterin-dependent aromatic amino acid hydroxylase family. As to quaternary structure, homodimer and homotetramer. The cofactor is Fe(2+). In terms of processing, phosphorylation at Ser-16 increases basal activity and facilitates activation by the substrate phenylalanine.

The catalysed reaction is (6R)-L-erythro-5,6,7,8-tetrahydrobiopterin + L-phenylalanine + O2 = (4aS,6R)-4a-hydroxy-L-erythro-5,6,7,8-tetrahydrobiopterin + L-tyrosine. It functions in the pathway amino-acid degradation; L-phenylalanine degradation; acetoacetate and fumarate from L-phenylalanine: step 1/6. Its activity is regulated as follows. N-terminal region of PAH is thought to contain allosteric binding sites for phenylalanine and to constitute an 'inhibitory' domain that regulates the activity of a catalytic domain in the C-terminal portion of the molecule. Its function is as follows. Catalyzes the hydroxylation of L-phenylalanine to L-tyrosine. This Bos taurus (Bovine) protein is Phenylalanine-4-hydroxylase (PAH).